A 2641-amino-acid polypeptide reads, in one-letter code: CCR4-NOT transcription complex subunit let-711 (2641 aa).

Residues 660 to 664 carry the LXXLL motif; the sequence is LSELL. Disordered stretches follow at residues 771 to 887, 936 to 963, 1197 to 1221, 1518 to 1565, and 2034 to 2054; these read SGRS…QNAQ, TQRQ…PQQQ, EGGR…PAAA, QSKI…SQGA, and GMNN…AGLQ. Composition is skewed to low complexity over residues 774-795, 802-839, and 853-877; these read SSSV…QQQQ, LPPS…SQQQ, and PAQF…HMMG. Residues 951–960 are compositionally biased toward pro residues; that stretch reads PQRPSGPPTP. The segment covering 1205–1221 has biased composition (low complexity); the sequence is GSAQAGSASSTPTPAAA. The span at 2034–2046 shows a compositional bias: low complexity; the sequence is GMNNAMNNGAGNA. Positions 2341–2345 match the LXXLL motif; sequence LRVLL. The disordered stretch occupies residues 2609-2641; sequence AQGSQPQAQPDGAPGPLGNNTGAANQQQNPNTN.

Belongs to the CNOT1 family. Component of the CCR4-NOT complex at least composed of ccf-1, ccr-4 and let-711, which is required for germ cell development in hermaphrodites. Within the complex interacts with ccf-1 and ccr-4; the interactions are direct. As to expression, highly expressed in the germline of hermaphrodites.

It is found in the nucleus. Its function is as follows. Scaffolding component of the CCR4-NOT complex which is one of the major cellular mRNA deadenylases and is linked to various cellular processes including bulk mRNA degradation, miRNA-mediated repression, translational repression during translational initiation and general transcription regulation. Positively regulates the accumulation of the CCR4-NOT complex component ccr-1. Within the complex promotes germ cell development and fertility in hermaphrodites. Additional complex functions may be a consequence of its influence on mRNA expression. Its scaffolding function implies its interaction with the catalytic complex module and diverse RNA-binding proteins mediating the complex recruitment to selected mRNA 3'UTRs. Mediates the recruitment of the CCR4-NOT complex to miRNA targets and to the RISC complex. Acts as a transcriptional repressor. Represses the ligand-dependent transcriptional activation by nuclear receptors. In embryos, plays a role in female pronucleus and mitotic spindle positioning during the first cleavage divisions after fertilization. This may partly be through negatively regulating the accumulation of zyg-9 at the centrosome. Negatively regulates the formation of long astral microtubules in developing embryos. Required for the stabilization and degradation of maternal mRNAs such as nos-2 in somatic blastomeres. In Caenorhabditis elegans, this protein is CCR4-NOT transcription complex subunit let-711.